Here is a 154-residue protein sequence, read N- to C-terminus: 3-dehydroquinate dehydratase (154 aa).

Tyr-26 acts as the Proton acceptor in catalysis. 3 residues coordinate substrate: Asn-77, His-83, and Asp-90. Catalysis depends on His-103, which acts as the Proton donor. Residues 104 to 105 and Arg-114 contribute to the substrate site; that span reads IS.

This sequence belongs to the type-II 3-dehydroquinase family. Homododecamer.

The catalysed reaction is 3-dehydroquinate = 3-dehydroshikimate + H2O. Its pathway is metabolic intermediate biosynthesis; chorismate biosynthesis; chorismate from D-erythrose 4-phosphate and phosphoenolpyruvate: step 3/7. Its function is as follows. Catalyzes a trans-dehydration via an enolate intermediate. The chain is 3-dehydroquinate dehydratase from Buchnera aphidicola subsp. Baizongia pistaciae (strain Bp).